Reading from the N-terminus, the 522-residue chain is Zinc finger and BTB domain-containing protein 18 (522 aa).

One can recognise a BTB domain in the interval 24–91 (CDCTVLVGDA…MYEGKLQFKD (68 aa)). Over residues 121 to 143 (ATTEADSTKKEEDASSCSDKVES) the composition is skewed to basic and acidic residues. Positions 121–165 (ATTEADSTKKEEDASSCSDKVESLSDGSSHMAGDLPSDEDEGEDE) are disordered. Position 157 is a phosphoserine (Ser157). Lys273 participates in a covalent cross-link: Glycyl lysine isopeptide (Lys-Gly) (interchain with G-Cter in SUMO2). Positions 310 to 427 (EPAHLAPLRE…TFSCMYTLKR (118 aa)) are interaction with DNMT3A. C2H2-type zinc fingers lie at residues 370 to 392 (FMCP…LSTH), 410 to 432 (PTCS…ERTH), 438 to 460 (YTCT…AVVH), and 466 to 489 (HACK…RKFH). Ser516 and Ser517 each carry phosphoserine.

Belongs to the krueppel C2H2-type zinc-finger protein family. ZBTB18 subfamily. In terms of assembly, interacts with DNMT3A.

It is found in the nucleus. In terms of biological role, transcriptional repressor that plays a role in various developmental processes such as myogenesis and brain development. Specifically binds the consensus DNA sequence 5'-[AC]ACATCTG[GT][AC]-3' which contains the E box core, and acts by recruiting chromatin remodeling multiprotein complexes. Plays a key role in myogenesis by directly repressing the expression of ID2 and ID3, 2 inhibitors of skeletal myogenesis. Also involved in controlling cell division of progenitor cells and regulating the survival of postmitotic cortical neurons. May also play a role in the organization of chromosomes in the nucleus. In Bos taurus (Bovine), this protein is Zinc finger and BTB domain-containing protein 18 (ZBTB18).